The primary structure comprises 319 residues: Ferrochelatase (319 aa).

2 residues coordinate Fe cation: His-193 and Glu-274.

The protein belongs to the ferrochelatase family.

The protein localises to the cytoplasm. The enzyme catalyses heme b + 2 H(+) = protoporphyrin IX + Fe(2+). It participates in porphyrin-containing compound metabolism; protoheme biosynthesis; protoheme from protoporphyrin-IX: step 1/1. Its function is as follows. Catalyzes the ferrous insertion into protoporphyrin IX. This chain is Ferrochelatase, found in Actinobacillus pleuropneumoniae serotype 7 (strain AP76).